The primary structure comprises 224 residues: MAQITASMVKELREKTGAGMMDCKKVLSEADGNIEKAVELLREKGLAGAEKKAGRLASEGIVETYIHGGKIASLVEINSETDFVAKNEEFKNFAKDIAMQVVASNPKYVSREEVPAEEVEKEKEVLIHQALNENDGKNIPEDKAKMIAEKKVEGRINKFYSQICLLEQPFIKDPNKTVEQLLTDLIAKIGENIKIRRFARFEVGEGLEKKNEDFAEEVKKQMGQ.

The involved in Mg(2+) ion dislocation from EF-Tu stretch occupies residues 81–84 (TDFV).

Belongs to the EF-Ts family.

It localises to the cytoplasm. Associates with the EF-Tu.GDP complex and induces the exchange of GDP to GTP. It remains bound to the aminoacyl-tRNA.EF-Tu.GTP complex up to the GTP hydrolysis stage on the ribosome. This Finegoldia magna (strain ATCC 29328 / DSM 20472 / WAL 2508) (Peptostreptococcus magnus) protein is Elongation factor Ts.